A 103-amino-acid polypeptide reads, in one-letter code: UPF0235 protein Dole_0289 (103 aa).

It belongs to the UPF0235 family.

This chain is UPF0235 protein Dole_0289, found in Desulfosudis oleivorans (strain DSM 6200 / JCM 39069 / Hxd3) (Desulfococcus oleovorans).